A 341-amino-acid chain; its full sequence is Adenosine deaminase (341 aa).

Residues H15 and H17 each contribute to the Zn(2+) site. Substrate is bound by residues H17, D19, and G172. H199 provides a ligand contact to Zn(2+). The Proton donor role is filled by E202. D279 lines the Zn(2+) pocket.

The protein belongs to the metallo-dependent hydrolases superfamily. Adenosine and AMP deaminases family. Adenosine deaminase subfamily. It depends on Zn(2+) as a cofactor.

It carries out the reaction adenosine + H2O + H(+) = inosine + NH4(+). The catalysed reaction is 2'-deoxyadenosine + H2O + H(+) = 2'-deoxyinosine + NH4(+). Functionally, catalyzes the hydrolytic deamination of adenosine and 2-deoxyadenosine. In Streptococcus equi subsp. zooepidemicus (strain MGCS10565), this protein is Adenosine deaminase.